The following is a 402-amino-acid chain: NADH-quinone oxidoreductase subunit D (402 aa).

Belongs to the complex I 49 kDa subunit family. As to quaternary structure, NDH-1 is composed of 14 different subunits. Subunits NuoB, C, D, E, F, and G constitute the peripheral sector of the complex.

The protein localises to the cell inner membrane. The enzyme catalyses a quinone + NADH + 5 H(+)(in) = a quinol + NAD(+) + 4 H(+)(out). Its function is as follows. NDH-1 shuttles electrons from NADH, via FMN and iron-sulfur (Fe-S) centers, to quinones in the respiratory chain. The immediate electron acceptor for the enzyme in this species is believed to be ubiquinone. Couples the redox reaction to proton translocation (for every two electrons transferred, four hydrogen ions are translocated across the cytoplasmic membrane), and thus conserves the redox energy in a proton gradient. The polypeptide is NADH-quinone oxidoreductase subunit D (Maricaulis maris (strain MCS10) (Caulobacter maris)).